Consider the following 541-residue polypeptide: Glutamyl-tRNA(Gln) amidotransferase subunit B, mitochondrial (541 aa).

It belongs to the GatB/GatE family. GatB subfamily. In terms of assembly, subunit of the heterotrimeric GatFAB amidotransferase (AdT) complex, composed of A, B and F subunits.

It is found in the mitochondrion. It catalyses the reaction L-glutamyl-tRNA(Gln) + L-glutamine + ATP + H2O = L-glutaminyl-tRNA(Gln) + L-glutamate + ADP + phosphate + H(+). Its function is as follows. Allows the formation of correctly charged Gln-tRNA(Gln) through the transamidation of misacylated Glu-tRNA(Gln) in the mitochondria. The reaction takes place in the presence of glutamine and ATP through an activated gamma-phospho-Glu-tRNA(Gln). The protein is Glutamyl-tRNA(Gln) amidotransferase subunit B, mitochondrial of Saccharomyces cerevisiae (strain YJM789) (Baker's yeast).